Reading from the N-terminus, the 795-residue chain is Phenylalanine--tRNA ligase beta subunit (795 aa).

The 110-residue stretch at 39–148 (AGEFTGVKVG…EGTTLGADVR (110 aa)) folds into the tRNA-binding domain. Positions 401–476 (PKANTVELRR…RIYGYNNIPN (76 aa)) constitute a B5 domain. 4 residues coordinate Mg(2+): Asp-454, Asp-460, Glu-463, and Glu-464. An FDX-ACB domain is found at 701–794 (SKFPANRRDI…IGEKFSATLR (94 aa)).

Belongs to the phenylalanyl-tRNA synthetase beta subunit family. Type 1 subfamily. In terms of assembly, tetramer of two alpha and two beta subunits. Requires Mg(2+) as cofactor.

The protein resides in the cytoplasm. The catalysed reaction is tRNA(Phe) + L-phenylalanine + ATP = L-phenylalanyl-tRNA(Phe) + AMP + diphosphate + H(+). The chain is Phenylalanine--tRNA ligase beta subunit from Aliivibrio fischeri (strain ATCC 700601 / ES114) (Vibrio fischeri).